A 423-amino-acid polypeptide reads, in one-letter code: Serpin B12 (423 aa).

A compositionally biased stretch (basic and acidic residues) spans 63-72; the sequence is LSKDEHKEPN. The tract at residues 63–106 is disordered; the sequence is LSKDEHKEPNDPSPQSESKASDSSLEGQKQTSASQDQQGESTND. The segment covering 75 to 106 has biased composition (polar residues); sequence SPQSESKASDSSLEGQKQTSASQDQQGESTND.

This sequence belongs to the serpin family. Ov-serpin subfamily. Interacts with SLFN12; as part of a pathway regulating cell differentiation.

The protein localises to the cytoplasm. Inhibits trypsin and plasmin, but not thrombin, coagulation factor Xa, or urokinase-type plasminogen activator. May play a role in cell differentiation. This chain is Serpin B12 (Serpinb12), found in Mus musculus (Mouse).